We begin with the raw amino-acid sequence, 467 residues long: MTKRERIVKSVLAHVPKDAINQFVSRGSTPFSVLIMAAIVGTLAGFVGTYFELAVHFVSETRTEWLRSEIGSVLPLWLAAVLISALLAFIGYFLVHRFAPEAAGSGIPEIEGAMDNIRPVRWWRVLPVKFFGGMGALGSGMVLGREGPTVQMGGAVGRMVTDIFRVKDDDTRHSLLASGAAGGLAAAFNAPLAGIMFVVEEMRPQFRYSLISIRAVIISAIMANIVFRAINGQDAVITMPQYQSPALQTLWLFLLLGALFGVFGVIFNKLITVAQDSFVAIHKNDRKRYLITGSILGGVFGLLLLYVPQLTGGGIALIPDVTTGNYSISILVLLFIGRVVTTLLCFGSGAPGGIFAPMLALGTLFGYAFGASADVLLPTLDIEPGVFAIAGMGALFAATVRAPITGILLVIEMTNNYYLILPLIITCLGAVIVAQLLGGQPIYSQLLHRTLKNDKLRQQDLPENQAS.

The Cytoplasmic segment spans residues 1 to 30; that stretch reads MTKRERIVKSVLAHVPKDAINQFVSRGSTP. The helical transmembrane segment at 31 to 67 threads the bilayer; the sequence is FSVLIMAAIVGTLAGFVGTYFELAVHFVSETRTEWLR. Residues 68–74 are Periplasmic-facing; that stretch reads SEIGSVL. The helical transmembrane segment at 75–98 threads the bilayer; it reads PLWLAAVLISALLAFIGYFLVHRF. A Selectivity filter part_1 motif is present at residues 104–108; it reads GSGIP. Residue Ser105 coordinates chloride. An intramembrane region (helical) is located at residues 107–114; the sequence is IPEIEGAM. Residues 115-121 are Cytoplasmic-facing; it reads DNIRPVR. A run of 2 helical transmembrane segments spans residues 122–139 and 146–164; these read WWRV…ALGS and EGPT…TDIF. A Selectivity filter part_2 motif is present at residues 144–148; that stretch reads GREGP. The Cytoplasmic segment spans residues 165 to 174; that stretch reads RVKDDDTRHS. Intramembrane regions (helical) lie at residues 175 to 187 and 191 to 199; these read LLAS…LAAA and PLAGIMFVV. Residues 200–212 are Cytoplasmic-facing; that stretch reads EEMRPQFRYSLIS. Residues 213–230 form a helical membrane-spanning segment; that stretch reads IRAVIISAIMANIVFRAI. The Periplasmic segment spans residues 231-250; sequence NGQDAVITMPQYQSPALQTL. The helical transmembrane segment at 251–279 threads the bilayer; it reads WLFLLLGALFGVFGVIFNKLITVAQDSFV. The Cytoplasmic portion of the chain corresponds to 280 to 285; that stretch reads AIHKND. A helical membrane pass occupies residues 286–307; the sequence is RKRYLITGSILGGVFGLLLLYV. The Periplasmic portion of the chain corresponds to 308-327; the sequence is PQLTGGGIALIPDVTTGNYS. Helical transmembrane passes span 328–347 and 353–374; these read ISIL…LCFG and GIFA…ASAD. The Selectivity filter part_3 motif lies at 353-357; it reads GIFAP. Residues Ile354 and Phe355 each coordinate chloride. The Periplasmic segment spans residues 375–384; sequence VLLPTLDIEP. Positions 385 to 399 form an intramembrane region, helical; that stretch reads GVFAIAGMGALFAAT. The segment at residues 400 to 402 is an intramembrane region (note=Loop between two helices); sequence VRA. The helical intramembrane region spans 403–414; that stretch reads PITGILLVIEMT. Positions 415–419 form an intramembrane region, note=Loop between two helices; that stretch reads NNYYL. Residues 420-436 form a helical membrane-spanning segment; the sequence is ILPLIITCLGAVIVAQL. The Cytoplasmic segment spans residues 437–467; it reads LGGQPIYSQLLHRTLKNDKLRQQDLPENQAS. Tyr443 contacts chloride.

It belongs to the chloride channel (TC 2.A.49) family. ClcA subfamily. Homodimer.

It localises to the cell inner membrane. The enzyme catalyses 2 chloride(in) + H(+)(out) = 2 chloride(out) + H(+)(in). Functionally, proton-coupled chloride transporter. Functions as antiport system and exchanges two chloride ions for 1 proton. Probably acts as an electrical shunt for an outwardly-directed proton pump that is linked to amino acid decarboxylation, as part of the extreme acid resistance (XAR) response. The chain is H(+)/Cl(-) exchange transporter ClcA from Vibrio parahaemolyticus serotype O3:K6 (strain RIMD 2210633).